The following is a 627-amino-acid chain: Pentatricopeptide repeat-containing protein At2g15630, mitochondrial (627 aa).

Residues 1–29 constitute a mitochondrion transit peptide; it reads MRRFTVPCILRHRISILSGAGYSPAAARL. PPR repeat units lie at residues 154–188, 189–223, 224–258, 259–293, 294–324, 326–360, 361–395, 396–430, 431–465, 466–500, 501–535, 536–570, and 571–605; these read STIL…GFYP, KTET…EIKS, NVYT…GIKP, TIVT…GFQP, DMQT…IGLV, DSVS…GMVP, TFYT…GIVL, DSVT…GIQP, TQFT…GMKP, DLVM…SINP, DDVT…GIKP, DHIS…GFNP, and TLLT…GIVP.

This sequence belongs to the PPR family. P subfamily.

The protein localises to the mitochondrion. The sequence is that of Pentatricopeptide repeat-containing protein At2g15630, mitochondrial from Arabidopsis thaliana (Mouse-ear cress).